A 353-amino-acid polypeptide reads, in one-letter code: Suppressor of RNA-mediated gene silencing (353 aa).

Belongs to the phytoreovirus non-structural protein 10 family.

Functionally, suppressor of RNA-mediated gene silencing, also known as post-transcriptional gene silencing (PTGS), a mechanism of plant viral defense that limits the accumulation of viral RNAs. This is Suppressor of RNA-mediated gene silencing from Rice dwarf virus (isolate Fujian) (RDV).